A 188-amino-acid chain; its full sequence is Elongation factor P-like protein (188 aa).

The protein belongs to the elongation factor P family.

In Xanthomonas axonopodis pv. citri (strain 306), this protein is Elongation factor P-like protein.